A 556-amino-acid chain; its full sequence is Zinc finger protein GLI1 (556 aa).

Disordered regions lie at residues 57–83 (TEHPGGAADGSRFSTPRGAGKLGKKRA), 133–178 (SLGY…TPAR), and 200–222 (KYPEEKSEGDISSPASTGTQDPL). The segment covering 135–148 (GYQNPPGQQKGQGQ) has biased composition (low complexity). C2H2-type zinc fingers lie at residues 247–272 (TNCYWDGCAKEFDTQEQLVHHINNEH), 280–307 (FVCHWAACSREQRPFKAQYMLVVHMRRH), 313–337 (HKCTFEGCNKAYSRLENLKTHLRSH), 343–368 (YVCEHEGCNKAFSNASDRAKHQNRTH), and 374–399 (YICKIPGCTKRYTDPSSLRKHVKTVH). The tract at residues 295-303 (KAQYMLVVH) is interaction with DNA. Interaction with DNA regions lie at residues 357–362 (ASDRAK) and 387–393 (DPSSLRK). The segment at 387–492 (DPSSLRKHVK…VEMTGNTGGS (106 aa)) is disordered. A compositionally biased stretch (low complexity) spans 454-472 (SKPQPSPGGQSSCSSDRSP).

The protein belongs to the GLI C2H2-type zinc-finger protein family.

The protein resides in the cytoplasm. It localises to the nucleus. Acts as a transcriptional activator. Binds to the DNA consensus sequence 5'-GACCACCCA-3'. May regulate the transcription of specific genes during normal development. May play a role in craniofacial development and digital development, as well as development of the central nervous system and gastrointestinal tract. Mediates SHH signaling. Plays a role in cell proliferation and differentiation via its role in SHH signaling. This Gallus gallus (Chicken) protein is Zinc finger protein GLI1 (GLI1).